The sequence spans 146 residues: UPF0178 protein Helmi_09130 (146 aa).

This sequence belongs to the UPF0178 family.

This is UPF0178 protein Helmi_09130 from Heliobacterium modesticaldum (strain ATCC 51547 / Ice1).